The chain runs to 215 residues: UPF0319 protein VVA1446 (215 aa).

A signal peptide spans 1–21 (MNIIKPLTCILAMSISGLATA).

The protein belongs to the UPF0319 family.

The protein is UPF0319 protein VVA1446 of Vibrio vulnificus (strain YJ016).